A 475-amino-acid chain; its full sequence is Peripherin (475 aa).

A disordered region spans residues 1 to 42 (MPSSASMSHHHSSGLRSSISSTSYRRTFGPPPSLSPGAFSYS). The tract at residues 1–103 (MPSSASMSHH…FLATRSNEKQ (103 aa)) is head. The span at 14 to 26 (GLRSSISSTSYRR) shows a compositional bias: low complexity. Tyrosine 24 bears the 3'-nitrotyrosine mark. A phosphoserine mark is found at serine 35 and serine 57. Serine 66 is subject to Phosphoserine; by PKB/AKT1. The region spanning 101–411 (EKQELQELND…KLLEGEESRI (311 aa)) is the IF rod domain. The interval 104–136 (ELQELNDRFANFIEKVRFLEQQNAALRGELSQA) is coil 1A. The linker 1 stretch occupies residues 137 to 147 (RGQEPARADQL). Positions 148-243 (CQQELRELRR…KLHEEELRDL (96 aa)) are coil 1B. The tract at residues 244–266 (QVSVESQQVQQVEVEATVKPELT) is linker 2. The interval 267 to 409 (AALRDIRAQY…YRKLLEGEES (143 aa)) is coil 2. A 3'-nitrotyrosine modification is found at tyrosine 383. The tail stretch occupies residues 410 to 475 (RISVPVHSFA…DLDKSSIHSY (66 aa)). The segment at 453 to 475 (EKVVTESQKEQHSDLDKSSIHSY) is disordered. Tyrosine 475 carries the phosphotyrosine modification.

The protein belongs to the intermediate filament family. As to quaternary structure, forms homodimers (in vitro). Homopolymerizes into a filamentous network (in vitro). Forms heterodimers with NEFL, NEFM or NEFH (in vitro). Interacts with DST (via C-terminus). Interacts with RAB7A; the interaction is direct. Interacts with PRKCE (via phorbol-ester/DAG-type 2 domain). In terms of processing, phosphorylated; phosphorylation increases after nerve injury in regenerating neurons. As to expression, expressed in the sciatic nerve and at very low levels in the central nervous system (at protein level). Expressed in the spinal cord, in the sciatic nerve at the level of the dorsal root ganglion and in trigeminal nerves (at protein level). Expressed in the cranial nerves in the hindbrain, including the sensory and motor trigeminal neurons, the mesencephalic trigeminal neurons, the spinal trigeminal neurons, and in the facial nerve (at protein level). Expressed in the cerebellum, with expression in the inferior cerebellar peduncle and the lateral deep cerebellar nucleus (at protein level). Expressed in vestibulocochlear neurons, such as the anteroventral cochlear nucleus, the dorsal cochlear nucleus, the superficial granule cell layer and the granule cell lamina (at protein level). Expressed in glossopharyngeal, vagal and hypoglossal neurons (at protein level). Expressed in peripheral sensory neurons, in the dorsal root ganglia and the spinal cord, and to a lower extent in motor neurons. Expressed in the optic tract of the central nervous system, especially in the lateral geniculate nucleus and the superior colliculus. Expressed in neurons of the pineal stalk in the cortex. Expressed in the spinal trigeminal tract of the midbrain, in the medulla and in the medial cerebellar peduncle.

Its subcellular location is the cytoplasm. The protein resides in the cytoskeleton. It localises to the cell projection. It is found in the axon. The protein localises to the perikaryon. Its function is as follows. Class-III neuronal intermediate filament protein. May form an independent structural network without the involvement of other neurofilaments or may cooperate with the neuronal intermediate filament proteins NEFL, NEFH, NEFM and INA to form filamentous networks. Assembly of the neuronal intermediate filaments may be regulated by RAB7A. Plays a role in the development of unmyelinated sensory neurons. May be involved in axon elongation and axon regeneration after injury. Inhibits neurite extension in type II spiral ganglion neurons in the cochlea. This Mus musculus (Mouse) protein is Peripherin (Prph).